Consider the following 74-residue polypeptide: MQLFVRAQELHTLEVTGQETVAQIKAHVASLEGIAPEDQVVLLAGSPLEDEATLGQCGVEALTTLEVAGRMLGG.

The protein belongs to the ubiquitin family.

In Rattus norvegicus (Rat), this protein is Ubiquitin-like protein FUBI (Fau).